A 476-amino-acid chain; its full sequence is MSTVLYRCPELLIGGEWRPGRHEQRLVVRNPATGEPLDELRLASADDLQLALQTTQQAFEHWRQVPAHERCARLERGVARLRENTERIAHLLTLEQGKTLAEARMECAMAADLIKWYAEEARRVYGRVIPARLPNSRMEVFKFPVGPVAAFSPWNFPLVLSARKLGGAIAAGCSIVLKAAEETPASVAAMVDCLNQELPPGVVQLLYGVPAEVSQALIASPVVRKVTFTGSVPVGRHLAELSARHLKRITLELGGHAPVIVCGDADIARTVNLMVQHKFRNAGQACLAPTRFFVDRRIYGDFVDAFGATQALRVGAGMAAETQMGPVASARRQAAVQDLIARSVAAGARPVASAVPEAGYFVAPTLLADVPLDAPVMSEEPFGPVACAVPFDSLDQAIAQANHNPYGLAGYLFTDSAKAILAVSERLEVGSLAVNGMGVSVPEAPFGGVKDSGYGSESGTEGMEAFLDTKFMHYVA.

Residues 154–155 (WN), 178–181 (KAAE), and 230–231 (GS) each bind NAD(+). The Proton acceptor role is filled by Glu252. Leu253 is a binding site for NAD(+). Cys286 acts as the Nucleophile in catalysis. Glu380 is a binding site for NAD(+).

This sequence belongs to the aldehyde dehydrogenase family. Homodimer.

It catalyses the reaction 4-(hydroxymethyl)benzenesulfonate + NAD(+) = 4-formylbenzenesulfonate + NADH + H(+). In terms of biological role, involved in the toluene-4-sulfonate degradation pathway. Does not discriminate between the sulfonate and the carboxyl substituents and can also be involved in the p-toluenecarboxylate degradation pathway. This chain is 4-(hydroxymethyl)benzenesulfonate dehydrogenase TsaD1 (tsaD1), found in Comamonas testosteroni (Pseudomonas testosteroni).